The sequence spans 394 residues: MSSSPFFVPRAPYAEDPAKSRGRRFPEDESRTRTPFARDRDRIIHTSAFRRLKEKTQVFVAHEGDNFRTRLTHSLEVAQVARSLATALGLDSDLAETIALGHDIGHPPFGHAGEDELQACMKAFGGFDHNVQTFRVVTELERRYPDFDGLNLTWETLEGIIKHNGPVTEKLGKPSWKAISKYDAEYKLGLNTWASAEAQVAALADDIAYNNHDVDDGVEAGLFTLDELMDVPLIGPILAAVRSERPDLDLRLTRLEAVRRMIGAMVDDVMGETLKRAAATGVQSAEDVRNLDHALVAFSADMAEDLARLRQFLHTRMYRHWKVNRTRSQARRILAEMFGLFLAEPDVLPSEWFARSQNRDEAGRARVVCDYIAGMTDRFAIEEHRKLFQLDVWN.

A disordered region spans residues 1–34; sequence MSSSPFFVPRAPYAEDPAKSRGRRFPEDESRTRT. Residues 16–34 are compositionally biased toward basic and acidic residues; that stretch reads DPAKSRGRRFPEDESRTRT. The HD domain occupies 70 to 210; sequence RLTHSLEVAQ…AALADDIAYN (141 aa).

This sequence belongs to the dGTPase family. Type 2 subfamily.

In Caulobacter sp. (strain K31), this protein is Deoxyguanosinetriphosphate triphosphohydrolase-like protein.